The chain runs to 257 residues: MVLIRVLANLLILQLSYAQKSSELVIGGDECNINEHPFLVLVYYDDYQCGGTLLNEEWVLTAAHCNGKDMEIYLGVHSKKVPNKDVQRRVPKEKFFCDSSKTYTKWNKDIMLIRLDRPVRKSAHIAPLSLPSSPPSVGSVCRVMGWGTITSPQETYPDVPHCANINLLDYEVCRAAYAGLPATSRTLCAGILEGGKDSCVGDSGGPLICNGQFQGIVSWGGDPCAQPREPGVCTNVFDHLDWIKGIIAGNTDVTCPL.

A signal peptide spans 1 to 18; sequence MVLIRVLANLLILQLSYA. The propeptide occupies 19-24; sequence QKSSEL. One can recognise a Peptidase S1 domain in the interval 25–248; that stretch reads VIGGDECNIN…HLDWIKGIIA (224 aa). 6 cysteine pairs are disulfide-bonded: C31–C162, C49–C65, C97–C255, C141–C209, C173–C188, and C199–C224. Residues H64 and D109 each act as charge relay system in the active site. S203 (charge relay system) is an active-site residue.

It belongs to the peptidase S1 family. Snake venom subfamily. In terms of assembly, monomer. As to expression, expressed by the venom gland.

It localises to the secreted. Functionally, snake venom serine protease with strong beta-fibrinogenolytic activities, angiotensin I (AGT)-degrading activities and strong kallikrein-like activities in vitro, releasing bradykinin from kininogen (KNG1). Intravenous injection strongly lowers blood pressure in experimental rats, which may be explained by the action on angiotensin I and kininogen. This Protobothrops mucrosquamatus (Taiwan habu) protein is Beta-fibrinogenase mucrofibrase-1.